Reading from the N-terminus, the 381-residue chain is UDP-4-amino-4-deoxy-L-arabinose--oxoglutarate aminotransferase (381 aa).

Lysine 182 is subject to N6-(pyridoxal phosphate)lysine.

Belongs to the DegT/DnrJ/EryC1 family. ArnB subfamily. As to quaternary structure, homodimer. Requires pyridoxal 5'-phosphate as cofactor.

The catalysed reaction is UDP-4-amino-4-deoxy-beta-L-arabinose + 2-oxoglutarate = UDP-beta-L-threo-pentopyranos-4-ulose + L-glutamate. It functions in the pathway nucleotide-sugar biosynthesis; UDP-4-deoxy-4-formamido-beta-L-arabinose biosynthesis; UDP-4-deoxy-4-formamido-beta-L-arabinose from UDP-alpha-D-glucuronate: step 2/3. The protein operates within bacterial outer membrane biogenesis; lipopolysaccharide biosynthesis. Functionally, catalyzes the conversion of UDP-4-keto-arabinose (UDP-Ara4O) to UDP-4-amino-4-deoxy-L-arabinose (UDP-L-Ara4N). The modified arabinose is attached to lipid A and is required for resistance to polymyxin and cationic antimicrobial peptides. This is UDP-4-amino-4-deoxy-L-arabinose--oxoglutarate aminotransferase from Proteus mirabilis (strain HI4320).